Here is a 119-residue protein sequence, read N- to C-terminus: UPF0102 protein SGR_1878 (119 aa).

Belongs to the UPF0102 family.

This chain is UPF0102 protein SGR_1878, found in Streptomyces griseus subsp. griseus (strain JCM 4626 / CBS 651.72 / NBRC 13350 / KCC S-0626 / ISP 5235).